We begin with the raw amino-acid sequence, 517 residues long: Aldehyde dehydrogenase X, mitochondrial (517 aa).

Residues 1–17 (MLRFLAPRLLSLQGRTA) constitute a mitochondrion transit peptide. N6-acetyllysine is present on lysine 51. At lysine 52 the chain carries N6-acetyllysine; alternate. N6-succinyllysine; alternate is present on lysine 52. An N6-succinyllysine modification is found at lysine 81. Residue 262–267 (GSTEVG) participates in NAD(+) binding. Glutamate 285 functions as the Proton acceptor in the catalytic mechanism. The active-site Nucleophile is the cysteine 319. N6-acetyllysine; alternate is present on residues lysine 364, lysine 383, lysine 399, lysine 414, and lysine 426. An N6-succinyllysine; alternate mark is found at lysine 364, lysine 383, lysine 399, lysine 414, and lysine 426. Lysine 429 carries the N6-acetyllysine modification.

It belongs to the aldehyde dehydrogenase family. Homotetramer.

The protein localises to the mitochondrion matrix. It carries out the reaction an aldehyde + NAD(+) + H2O = a carboxylate + NADH + 2 H(+). Its pathway is alcohol metabolism; ethanol degradation; acetate from ethanol: step 2/2. In terms of biological role, ALDHs play a major role in the detoxification of alcohol-derived acetaldehyde. They are involved in the metabolism of corticosteroids, biogenic amines, neurotransmitters, and lipid peroxidation. This chain is Aldehyde dehydrogenase X, mitochondrial (ALDH1B1), found in Pongo abelii (Sumatran orangutan).